The following is a 473-amino-acid chain: Myocyte-specific enhancer factor 2C (473 aa).

An MADS-box domain is found at 3–57 (RKKIQITRIMDERNRQVTFTKRKFGLMKKAYELSVLCDCEIALIIFNSTNKLFQY). The residue at position 4 (lysine 4) is an N6-acetyllysine. A DNA-binding region (mef2-type) is located at residues 58 to 86 (ASTDMDKVLLKYTEYNEPHESRTNSDIVE). Serine 59 carries the phosphoserine; by CK2 modification. Residues 91–116 (KGLNGCDSPDPDADDSVGHSPESEDK) are disordered. Phosphoserine is present on residues serine 98, serine 106, and serine 110. N6-acetyllysine occurs at positions 116 and 119. Positions 180-224 (NSMSPGVTHRPPSAGNTGGLMGGDLTSGAGTSAGNGYGNPRNSPG) are disordered. Phosphoserine occurs at positions 222 and 228. An N6-acetyllysine mark is found at lysine 234 and lysine 239. Position 240 is a phosphoserine (serine 240). N6-acetyllysine occurs at positions 252 and 264. The segment at 271–278 (SEDVDLLL) is beta domain. 2 positions are modified to phosphothreonine; by MAPK14: threonine 293 and threonine 300. The transcription repressor stretch occupies residues 368–399 (ACTSTHLSQSSNLSLPSTQSLNIKSEPVSPPR). Over residues 375–390 (SQSSNLSLPSTQSLNI) the composition is skewed to polar residues. Positions 375-473 (SQSSNLSLPS…RMRLSEGWAT (99 aa)) are disordered. Residue lysine 391 forms a Glycyl lysine isopeptide (Lys-Gly) (interchain with G-Cter in SUMO) linkage. The residue at position 396 (serine 396) is a Phosphoserine; by CDK5. The residue at position 419 (serine 419) is a Phosphoserine; by MAPK7. The span at 419–432 (SPVDSLSSCSSSYD) shows a compositional bias: low complexity. A compositionally biased stretch (basic and acidic residues) spans 433-443 (GSDREDHRNEF). Serine 445 carries the phosphoserine modification.

Belongs to the MEF2 family. In terms of assembly, forms a complex with class II HDACs in undifferentiating cells. On myogenic differentiation, HDACs are released into the cytoplasm allowing MEF2s to interact with other proteins for activation. Interacts with EP300 in differentiating cells; the interaction acetylates MEF2C leading to increased DNA binding and activation. Interacts with HDAC7 and CARM1. Interacts with HDAC4 and HDAC9; the interaction with HDACs represses transcriptional activity. Interacts with LPIN1. Interacts with MYOCD. Interacts with AKAP13. Interacts with FOXK1; the interaction inhibits MEF2C transactivation activity. Interacts (via N-terminus) with HABP4; this interaction decreases DNA-binding activity of MEF2C in myocardial cells in response to mechanical stress. Interacts with JPH2; interaction specifically takes place with the Junctophilin-2 N-terminal fragment cleavage product of JPH2. Interacts (via MADS box) with SOX18. Interacts with PHF7; the interaction promotes MEF2C binding to its transcription targets. In terms of processing, phosphorylation on Ser-59 enhances DNA binding activity. Phosphorylation on Ser-396 is required for Lys-391 sumoylation and inhibits transcriptional activity. Acetylated by p300 on several sites in diffentiating myocytes. Acetylation on Lys-4 increases DNA binding and transactivation. Post-translationally, sumoylated on Lys-391 with SUMO2 but not by SUMO1 represses transcriptional activity. In terms of processing, proteolytically cleaved in cerebellar granule neurons, probably by caspase 7, following neurotoxicity. Preferentially cleaves the CDK5-mediated hyperphosphorylated form which leads to neuron apoptosis and transcriptional inactivation. Expressed in brain and skeletal muscle.

The protein resides in the nucleus. Its subcellular location is the cytoplasm. It is found in the sarcoplasm. In terms of biological role, transcription activator which binds specifically to the MEF2 element present in the regulatory regions of many muscle-specific genes. Controls cardiac morphogenesis and myogenesis, and is also involved in vascular development. Enhances transcriptional activation mediated by SOX18. Plays an essential role in hippocampal-dependent learning and memory by suppressing the number of excitatory synapses and thus regulating basal and evoked synaptic transmission. Crucial for normal neuronal development, distribution, and electrical activity in the neocortex. Necessary for proper development of megakaryocytes and platelets and for bone marrow B-lymphopoiesis. Required for B-cell survival and proliferation in response to BCR stimulation, efficient IgG1 antibody responses to T-cell-dependent antigens and for normal induction of germinal center B-cells. May also be involved in neurogenesis and in the development of cortical architecture. Isoforms that lack the repressor domain are more active than isoform 1. The polypeptide is Myocyte-specific enhancer factor 2C (Homo sapiens (Human)).